Reading from the N-terminus, the 309-residue chain is 11-beta-hydroxysteroid dehydrogenase-like 3 (309 aa).

The chain crosses the membrane as a helical; Signal-anchor for type II membrane protein span at residues 10–30 (LLLPPLTIIFLFLFYPFYLLI). Residues 54 to 80 (GASSGIGEHVAYEYAKKGAYLALVARR) and aspartate 105 each bind NADP(+). Serine 184 is a substrate binding site. Tyrosine 197 acts as the Proton acceptor in catalysis. NADP(+)-binding positions include 197-201 (YAASK) and lysine 201.

It belongs to the short-chain dehydrogenases/reductases (SDR) family.

Its subcellular location is the membrane. The protein is 11-beta-hydroxysteroid dehydrogenase-like 3 (HSD3) of Arabidopsis thaliana (Mouse-ear cress).